The following is a 418-amino-acid chain: Mitochondrial outer membrane protein SLC25A46 (418 aa).

Residues S32 and S35 each carry the phosphoserine modification. T45 is modified (phosphothreonine). Residues 46-96 (PPDIPGSRNLHWGEKSPSYGVPSAPPTLEGPAEEPFPGGGDGPRPGRSSEQ) are disordered. A Solcar 1 repeat occupies 96 to 187 (QLNRFAGFGI…GIISEFTPLP (92 aa)). The next 6 helical transmembrane spans lie at 103-123 (FGIG…CIVL), 167-187 (FIVQ…TPLP), 202-222 (HLLL…ASLI), 258-278 (LLPL…HYII), 314-334 (FPEL…LYPL), and 382-402 (VFGF…HATI). The stretch at 311-416 (DAYFPELIAN…KIIYSTLLQN (106 aa)) is one Solcar 2 repeat.

Belongs to the mitochondrial carrier (TC 2.A.29) family. Associates with the mitochondrial contact site and cristae organizing system (MICOS) complex. May associate with the endoplasmic reticulum membrane protein complex (EMC). Widely expressed. Highly expressed in hindbrain, spinal cord and brain coronal sections containing corpus callosum, fornix, optic chiasm, thalamus, hypothalamus, midbrain, pons and cerebellum.

It localises to the mitochondrion outer membrane. Its function is as follows. Transmembrane protein of the mitochondrial outer membrane that controls mitochondrial organization. May regulate the assembly of the MICOS (mitochondrial contact site and cristae organizing system) complex which is essential to the biogenesis and dynamics of mitochondrial cristae, the inwards folds of the inner mitochondrial membrane. Through its interaction with the EMC (endoplasmic reticulum membrane protein complex), could regulate mitochondrial lipid homeostasis and thereby mitochondrial fission. The protein is Mitochondrial outer membrane protein SLC25A46 of Rattus norvegicus (Rat).